The sequence spans 435 residues: Tol-Pal system protein TolB (435 aa).

The N-terminal stretch at methionine 1–alanine 20 is a signal peptide.

It belongs to the TolB family. In terms of assembly, the Tol-Pal system is composed of five core proteins: the inner membrane proteins TolA, TolQ and TolR, the periplasmic protein TolB and the outer membrane protein Pal. They form a network linking the inner and outer membranes and the peptidoglycan layer.

The protein resides in the periplasm. In terms of biological role, part of the Tol-Pal system, which plays a role in outer membrane invagination during cell division and is important for maintaining outer membrane integrity. The polypeptide is Tol-Pal system protein TolB (Francisella tularensis subsp. tularensis (strain WY96-3418)).